A 357-amino-acid polypeptide reads, in one-letter code: MAAVVAMDTQLMLGVGLIEKDSNGEALWVWCYPSTTASLRNLLLRKCCLTDENKLLHPFVFGQYRRTWFYVTTVEVPDSSVLKKVTHFSIVLTAKDFNPEKYAAFTRILCRIYLKYGSPVKMMESYIAVLTKGICQSEENGSFLSRDFDGRKAYLAGSIKDIVSQFGMETVILHTALMLKKRIVVYHPKIEAVQEFTRTLPALVWHRQDWTILHSYMHLHAEELEGLQMCTGYIAGFVELEVSNRPDLYDVFVNLADSEITIAPLAKEAMTMGKLHKEIGQLIVQSAEDPEKSDSQVIQDIALKTKEIFTHLAPFSEVSDDGGKVILNVEALKQQRFPPATENFLYHLAAAEQMLKV.

Positions 1 to 136 constitute a uDENN domain; the sequence is MAAVVAMDTQ…IAVLTKGICQ (136 aa). Positions 152–299 constitute a cDENN domain; that stretch reads KAYLAGSIKD…PEKSDSQVIQ (148 aa). Residues 301–357 enclose the dDENN domain; that stretch reads IALKTKEIFTHLAPFSEVSDDGGKVILNVEALKQQRFPPATENFLYHLAAAEQMLKV.

Belongs to the DENND10 family. In terms of assembly, interacts with the coiled-coil heterodimer of CCDC22 and CCDC93; the interaction is direct. Interacts with RAB27A and RAB27B (GDP-bound forms preferentially).

It localises to the late endosome. In terms of biological role, guanine nucleotide exchange factor (GEF) regulating homeostasis of late endocytic pathway, including endosomal positioning, maturation and secretion, possibly through activating Rab proteins such as RAB27A and RAB27B. Promotes the exchange of GDP to GTP, converting inactive GDP-bound RAB27A and RAB27B into their active GTP-bound form. The chain is DENN domain-containing protein 10 from Mus musculus (Mouse).